The following is a 157-amino-acid chain: SUMO-conjugating enzyme UBC9 (157 aa).

At Ser2 the chain carries N-acetylserine. The 154-residue stretch at 4-157 (LCLQRLQEER…VLLQAKQYSK (154 aa)) folds into the UBC core domain. Catalysis depends on Cys93, which acts as the Glycyl thioester intermediate.

Belongs to the ubiquitin-conjugating enzyme family. Interacts with SIZ1.

It is found in the nucleus. The protein operates within protein modification; protein sumoylation. Its function is as follows. E2 ubiquitin-like--protein ligase mediating SUMO/Smt3 attachment to septins and PCNA. Seems to be involved in degradation of S- (CLB5) and M-phase cyclins (CLB2). This is SUMO-conjugating enzyme UBC9 (UBC9) from Saccharomyces cerevisiae (strain ATCC 204508 / S288c) (Baker's yeast).